Consider the following 464-residue polypeptide: Argininosuccinate lyase (464 aa).

This sequence belongs to the lyase 1 family. Argininosuccinate lyase subfamily.

It localises to the cytoplasm. The catalysed reaction is 2-(N(omega)-L-arginino)succinate = fumarate + L-arginine. It participates in amino-acid biosynthesis; L-arginine biosynthesis; L-arginine from L-ornithine and carbamoyl phosphate: step 3/3. This chain is Argininosuccinate lyase, found in Pseudomonas putida (strain GB-1).